We begin with the raw amino-acid sequence, 194 residues long: MTELALILVSAILVNNFVLVQFLGLCPFMGVSRKIETAIGLSLATTFVLTLAAMCSHILQRYVLRPLDLEYLRTIGFILVIAVVVQFTEMLVKKTSPLLYRVLGIFLPLITTNCIVLGVALLNANKAEYGFLQATTQGFGAGLGFSLVLVLFAALRERIAIADVPAPFRGAAIGMITAGLMSLAFMGFSGLVRP.

6 consecutive transmembrane segments (helical) span residues 4–24, 39–59, 72–92, 102–122, 135–155, and 172–192; these read LALI…QFLG, IGLS…SHIL, LRTI…EMLV, VLGI…VALL, TTQG…FAAL, and AIGM…SGLV.

It belongs to the NqrDE/RnfAE family. The complex is composed of six subunits: RnfA, RnfB, RnfC, RnfD, RnfE and RnfG.

It localises to the cell inner membrane. Its function is as follows. Part of a membrane-bound complex that couples electron transfer with translocation of ions across the membrane. This chain is Ion-translocating oxidoreductase complex subunit A, found in Pseudomonas aeruginosa (strain LESB58).